Here is a 229-residue protein sequence, read N- to C-terminus: Vacuolar protein-sorting-associated protein 60 (229 aa).

Positions 9–155 (NKKSHDQLLQ…QGDELQEVLA (147 aa)) form a coiled coil. Serine 12 is modified (phosphoserine). Residues 128–159 (INIDKLQDMQDEMLDLIEQGDELQEVLAMNNN) form an interaction with VTA1 region. Residues 186-229 (PTSENSLGNDMPSYLLGANAPPAFIDEEPNLDTEDKNKALESAQ) are disordered. Residues 218 to 229 (TEDKNKALESAQ) are compositionally biased toward basic and acidic residues.

Belongs to the SNF7 family. As to quaternary structure, interacts with VTA1; the interaction occurs at he endosomal membrane.

It is found in the endosome membrane. It localises to the vacuole membrane. In terms of biological role, has a role in a late stage of multivesicular body (MVB) formation. Can stimulate VPS4 ATPase activity via VTA1. The sequence is that of Vacuolar protein-sorting-associated protein 60 (VPS60) from Saccharomyces cerevisiae (strain ATCC 204508 / S288c) (Baker's yeast).